Consider the following 71-residue polypeptide: Large ribosomal subunit protein uL29 (71 aa).

The segment at 32-51 (GVNKSTGGAPSNPGKISETK) is disordered.

It belongs to the universal ribosomal protein uL29 family.

This chain is Large ribosomal subunit protein uL29, found in Methanococcus maripaludis (strain DSM 14266 / JCM 13030 / NBRC 101832 / S2 / LL).